A 409-amino-acid chain; its full sequence is Mitochondrial protein import protein MAS5 (409 aa).

The necessary for HAP1 repression in the absence of heme stretch occupies residues 1–172; that stretch reads MVKETKFYDI…NGQGIKFVTR (172 aa). The J domain maps to 4 to 72; sequence ETKFYDILGV…RDIYDQFGED (69 aa). Substrate contacts are provided by residues Ile116 and 135 to 137; that span reads LAL. The segment at 130 to 213 adopts a CR-type zinc-finger fold; the sequence is GRTAKLALNK…CNGKKVENER (84 aa). Cys143, Cys146, Cys159, Cys162, Cys185, and Cys188 together coordinate Zn(2+). 3 CXXCXGXG motif repeats span residues 143-150, 159-166, and 185-192; these read CKECEGRG, CTSCNGQG, and CDVCHGTG. A Glycyl lysine isopeptide (Lys-Gly) (interchain with G-Cter in ubiquitin) cross-link involves residue Lys198. Zn(2+) is bound by residues Cys201 and Cys204. The CXXCXGXG motif repeat unit spans residues 201 to 208; that stretch reads CKSCNGKK. Substrate-binding positions include 215-216 and 247-249; these read IL and VVF. The disordered stretch occupies residues 382-409; sequence RTRASRGGANYDSDEEEQGGEGVQCASQ. Cys406 bears the Cysteine methyl ester mark. A lipid anchor (S-farnesyl cysteine) is attached at Cys406. Residues 407–409 constitute a propeptide, removed in mature form; that stretch reads ASQ.

Homodimer. Interacts with HAP1. Component of the HMC including HAP1, SRO9 and YDJ1.

The protein localises to the cytoplasm. The protein resides in the perinuclear region. Probably involved in mitochondrial protein import. Is also required for efficient translocation of pre-pro-alpha-factor. Involved in heme regulation of HAP1, as a component of the high-molecular-weight (HMC) complex. The polypeptide is Mitochondrial protein import protein MAS5 (YDJ1) (Saccharomyces cerevisiae (strain ATCC 204508 / S288c) (Baker's yeast)).